Consider the following 216-residue polypeptide: Large ribosomal subunit protein uL1 (216 aa).

This sequence belongs to the universal ribosomal protein uL1 family.

This is Large ribosomal subunit protein uL1 from Oryza sativa subsp. indica (Rice).